Here is a 186-residue protein sequence, read N- to C-terminus: LSM12 homolog B (186 aa).

The 74-residue stretch at 1-74 (MSSLAPCFTV…CMDIEIVKEA (74 aa)) folds into the Sm domain. Residues 84–186 (EPIDLPMIRE…VVQNFCSKQF (103 aa)) enclose the AD domain.

This sequence belongs to the LSM12 family. Interacts with Sbat; along with Sbat and Vlet, may form an accessory subcomplex involved in SMN complex function.

Its function is as follows. May have an accessory function in the survival motor neuron (SMN) complex. The protein is LSM12 homolog B of Drosophila melanogaster (Fruit fly).